The primary structure comprises 231 residues: Homeobox protein EMX1 (231 aa).

The homeobox DNA-binding region spans 133 to 192; that stretch reads PKRIRTAFSPSQLLRLERAFEKNHYVVGAERKQLANSLSLSETQVKVWFQNRRTKYKRQK. Residues 193–231 are disordered; it reads LEEEGPECTQKKKGNHHINRWRIATKQTGSEDIDVMSDA. Over residues 203–212 the composition is skewed to basic residues; sequence KKKGNHHINR.

The protein belongs to the EMX homeobox family.

It localises to the nucleus. Its function is as follows. May function in combinations with OTX1/2 to specify cell fates in the developing central nervous system. This Danio rerio (Zebrafish) protein is Homeobox protein EMX1 (emx1).